Here is an 80-residue protein sequence, read N- to C-terminus: uncharacterized protein (80 aa).

4Fe-4S ferredoxin-type domains follow at residues Lys-21–Asn-49 and Asn-50–Ala-80. 8 residues coordinate [4Fe-4S] cluster: Cys-30, Cys-33, Cys-36, Cys-40, Cys-60, Cys-63, Cys-66, and Cys-70.

[4Fe-4S] cluster serves as cofactor.

This is an uncharacterized protein from Methanocaldococcus jannaschii (strain ATCC 43067 / DSM 2661 / JAL-1 / JCM 10045 / NBRC 100440) (Methanococcus jannaschii).